The chain runs to 427 residues: Tol-Pal system protein TolB (427 aa).

An N-terminal signal peptide occupies residues 1-27 (MPVSLLRALLVFSLLCLGLSATRAAHA).

It belongs to the TolB family. As to quaternary structure, the Tol-Pal system is composed of five core proteins: the inner membrane proteins TolA, TolQ and TolR, the periplasmic protein TolB and the outer membrane protein Pal. They form a network linking the inner and outer membranes and the peptidoglycan layer.

The protein resides in the periplasm. Part of the Tol-Pal system, which plays a role in outer membrane invagination during cell division and is important for maintaining outer membrane integrity. The chain is Tol-Pal system protein TolB from Thiobacillus denitrificans (strain ATCC 25259 / T1).